Consider the following 221-residue polypeptide: Probable septum site-determining protein MinC (221 aa).

It belongs to the MinC family. Interacts with MinD and FtsZ.

Cell division inhibitor that blocks the formation of polar Z ring septums. Rapidly oscillates between the poles of the cell to destabilize FtsZ filaments that have formed before they mature into polar Z rings. Prevents FtsZ polymerization. The sequence is that of Probable septum site-determining protein MinC from Shewanella woodyi (strain ATCC 51908 / MS32).